The chain runs to 593 residues: V-type sodium ATPase catalytic subunit A (593 aa).

232–239 (GPFGAGKT) is an ATP binding site.

The protein belongs to the ATPase alpha/beta chains family.

The enzyme catalyses 4 Na(+)(in) + ATP + H2O = 4 Na(+)(out) + ADP + phosphate + H(+). Its function is as follows. Involved in ATP-driven sodium extrusion. The chain is V-type sodium ATPase catalytic subunit A (ntpA) from Enterococcus hirae (strain ATCC 9790 / DSM 20160 / JCM 8729 / LMG 6399 / NBRC 3181 / NCIMB 6459 / NCDO 1258 / NCTC 12367 / WDCM 00089 / R).